The primary structure comprises 329 residues: DNA-directed RNA polymerase subunit alpha (329 aa).

The alpha N-terminal domain (alpha-NTD) stretch occupies residues 1–235 (MQGSVTEFLK…EQLEAFVDLR (235 aa)). The interval 249–329 (FDPILLRPVD…NWPPASIADE (81 aa)) is alpha C-terminal domain (alpha-CTD).

Belongs to the RNA polymerase alpha chain family. As to quaternary structure, homodimer. The RNAP catalytic core consists of 2 alpha, 1 beta, 1 beta' and 1 omega subunit. When a sigma factor is associated with the core the holoenzyme is formed, which can initiate transcription.

The catalysed reaction is RNA(n) + a ribonucleoside 5'-triphosphate = RNA(n+1) + diphosphate. Its function is as follows. DNA-dependent RNA polymerase catalyzes the transcription of DNA into RNA using the four ribonucleoside triphosphates as substrates. The protein is DNA-directed RNA polymerase subunit alpha of Shigella flexneri serotype 5b (strain 8401).